Reading from the N-terminus, the 808-residue chain is Ribosome biogenesis protein BOP1 homolog (808 aa).

Low complexity-rich tracts occupy residues 1–25 (MTSP…LTPC) and 33–50 (ATSS…SSFD). The interval 1–55 (MTSPKGKPSPKRSAPAPATAALTPCAEERTEGATSSASASASSHISSSFDSPRDD) is disordered. WD repeat units follow at residues 430–469 (GHTA…LMKR), 640–680 (KFSE…RRFK), 682–720 (SGGV…KPYK), 724–766 (SHKG…DYNK), and 777–808 (KHQR…AWTE).

The protein belongs to the WD repeat BOP1/ERB1 family.

The protein localises to the nucleus. It is found in the nucleolus. Its subcellular location is the nucleoplasm. Its function is as follows. Required for maturation of ribosomal RNAs and formation of the large ribosomal subunit. This Leishmania major protein is Ribosome biogenesis protein BOP1 homolog.